The sequence spans 321 residues: MDKKVTLAQLKEVVQEAYDQVKTNTGGKNADYIPYLANVNKDLFGISVCLLNGQTIHVGDTDYRFGIESVSKVHTAILALRQYGAKEILDKIGADATGLPFNSIIAILLENDHPSTPLVNAGAISACSMVQPIGDSAKKWDAIVENVTDLCGSAPQLIDELYKSESDTNFNNRSIAWLLKNYNRIYDDPDMALDLYTRQCSLGVTALQLSVAAGTIANGGVNPVTKKEVFDASLAPKITAMIAAVGFYEHTGDWMYTSGIPAKTGVGGGVMGVLPGQFGIAAFAPPLDGAGNSVKAQLAIQYVMNKLGLNVFSDNHLIVVD.

Residues Ser69, Asn120, Glu165, Asn172, Tyr196, Tyr248, and Val266 each contribute to the substrate site.

The protein belongs to the glutaminase family. As to quaternary structure, homotetramer.

The enzyme catalyses L-glutamine + H2O = L-glutamate + NH4(+). This Bacteroides thetaiotaomicron (strain ATCC 29148 / DSM 2079 / JCM 5827 / CCUG 10774 / NCTC 10582 / VPI-5482 / E50) protein is Glutaminase.